Reading from the N-terminus, the 189-residue chain is Phosphoheptose isomerase (189 aa).

The 157-residue stretch at 33–189 (CTDTLKAGNK…ELVEREIYGG (157 aa)) folds into the SIS domain. 48–50 (NGG) serves as a coordination point for substrate. Zn(2+) is bound by residues His-57 and Glu-61. Residues Glu-61, 90-91 (ND), 116-118 (STS), Ser-121, and Gln-168 each bind substrate. The Zn(2+) site is built by Gln-168 and His-176.

Belongs to the SIS family. GmhA subfamily. Zn(2+) serves as cofactor.

The protein resides in the cytoplasm. The enzyme catalyses 2 D-sedoheptulose 7-phosphate = D-glycero-alpha-D-manno-heptose 7-phosphate + D-glycero-beta-D-manno-heptose 7-phosphate. It participates in carbohydrate biosynthesis; D-glycero-D-manno-heptose 7-phosphate biosynthesis; D-glycero-alpha-D-manno-heptose 7-phosphate and D-glycero-beta-D-manno-heptose 7-phosphate from sedoheptulose 7-phosphate: step 1/1. Its function is as follows. Catalyzes the isomerization of sedoheptulose 7-phosphate in D-glycero-D-manno-heptose 7-phosphate. This chain is Phosphoheptose isomerase, found in Akkermansia muciniphila (strain ATCC BAA-835 / DSM 22959 / JCM 33894 / BCRC 81048 / CCUG 64013 / CIP 107961 / Muc).